A 304-amino-acid polypeptide reads, in one-letter code: WW domain-binding protein 1 (304 aa).

The segment at 1–26 (MARASSRNSSEEAWGSLQAPQQQQSP) is disordered. 2 short sequence motifs (PPxY motif) span residues 159-162 (PPAY) and 172-176 (PPPPY). Disordered stretches follow at residues 206–235 (TNVE…VHIP) and 252–304 (CPCP…GDIP). Residues 209 to 218 (EGVSSQQSAL) show a composition bias toward polar residues.

As to quaternary structure, binds to the WW domain of YAP1, WWP1 and WWP2. Interacts with WWOX. Interacts with NEDD4.

The protein is WW domain-binding protein 1 (Wbp1) of Mus musculus (Mouse).